The sequence spans 176 residues: Cathelicidin-2 (176 aa).

The N-terminal stretch at 1-29 is a signal peptide; the sequence is METQGASLSLGRWSLWLLLLGLVLPSASA. Residue glutamine 30 is modified to Pyrrolidone carboxylic acid. The propeptide occupies 30 to 130; sequence QALSYREAVL…DINCNELQSV (101 aa). Cystine bridges form between cysteine 85–cysteine 96 and cysteine 107–cysteine 124. Positions 135–176 are disordered; it reads PIRRPPIRPPFRPPFRPPVRPPIRPPFRPPFRPPIGPFPGRR. Pro residues predominate over residues 141–176; that stretch reads IRPPFRPPFRPPVRPPIRPPFRPPFRPPIGPFPGRR. The residue at position 173 (proline 173) is a Proline amide. A propeptide spans 174-176 (removed in mature form); sequence GRR.

This sequence belongs to the cathelicidin family. In terms of processing, elastase is responsible for its maturation.

The protein resides in the secreted. Binds to the lipid A moiety of bacterial lipipolysaccharides (LPS), a glycolipid present in the outer membrane of all Gram-negative bacteria. Potent antimicrobial activity. In Ovis aries (Sheep), this protein is Cathelicidin-2 (CATHL2).